A 477-amino-acid chain; its full sequence is ATP synthase subunit beta, chloroplastic (477 aa).

Residue 156-163 participates in ATP binding; that stretch reads GGAGVGKT.

It belongs to the ATPase alpha/beta chains family. As to quaternary structure, F-type ATPases have 2 components, CF(1) - the catalytic core - and CF(0) - the membrane proton channel. CF(1) has five subunits: alpha(3), beta(3), gamma(1), delta(1), epsilon(1). CF(0) has four main subunits: a(1), b(1), b'(1) and c(9-12).

The protein localises to the plastid. The protein resides in the chloroplast thylakoid membrane. The catalysed reaction is ATP + H2O + 4 H(+)(in) = ADP + phosphate + 5 H(+)(out). Its function is as follows. Produces ATP from ADP in the presence of a proton gradient across the membrane. The catalytic sites are hosted primarily by the beta subunits. The sequence is that of ATP synthase subunit beta, chloroplastic from Bigelowiella natans (Pedinomonas minutissima).